A 185-amino-acid chain; its full sequence is Elongation factor P (185 aa).

The protein belongs to the elongation factor P family.

The protein resides in the cytoplasm. Its pathway is protein biosynthesis; polypeptide chain elongation. Involved in peptide bond synthesis. Stimulates efficient translation and peptide-bond synthesis on native or reconstituted 70S ribosomes in vitro. Probably functions indirectly by altering the affinity of the ribosome for aminoacyl-tRNA, thus increasing their reactivity as acceptors for peptidyl transferase. The sequence is that of Elongation factor P from Nitrosomonas europaea (strain ATCC 19718 / CIP 103999 / KCTC 2705 / NBRC 14298).